The primary structure comprises 414 residues: Glucose-1-phosphate adenylyltransferase (414 aa).

Alpha-D-glucose 1-phosphate contacts are provided by residues Gly164, 181–182, and Ser199; that span reads EK.

This sequence belongs to the bacterial/plant glucose-1-phosphate adenylyltransferase family. Homotetramer.

It catalyses the reaction alpha-D-glucose 1-phosphate + ATP + H(+) = ADP-alpha-D-glucose + diphosphate. The protein operates within glycan biosynthesis; glycogen biosynthesis. Functionally, involved in the biosynthesis of ADP-glucose, a building block required for the elongation reactions to produce glycogen. Catalyzes the reaction between ATP and alpha-D-glucose 1-phosphate (G1P) to produce pyrophosphate and ADP-Glc. The chain is Glucose-1-phosphate adenylyltransferase from Kocuria rhizophila (strain ATCC 9341 / DSM 348 / NBRC 103217 / DC2201).